A 439-amino-acid polypeptide reads, in one-letter code: Methylenetetrahydrofolate--tRNA-(uracil-5-)-methyltransferase TrmFO (439 aa).

8–13 is an FAD binding site; sequence GGGLAG.

Belongs to the MnmG family. TrmFO subfamily. The cofactor is FAD.

The protein resides in the cytoplasm. It catalyses the reaction uridine(54) in tRNA + (6R)-5,10-methylene-5,6,7,8-tetrahydrofolate + NADH + H(+) = 5-methyluridine(54) in tRNA + (6S)-5,6,7,8-tetrahydrofolate + NAD(+). It carries out the reaction uridine(54) in tRNA + (6R)-5,10-methylene-5,6,7,8-tetrahydrofolate + NADPH + H(+) = 5-methyluridine(54) in tRNA + (6S)-5,6,7,8-tetrahydrofolate + NADP(+). In terms of biological role, catalyzes the folate-dependent formation of 5-methyl-uridine at position 54 (M-5-U54) in all tRNAs. The polypeptide is Methylenetetrahydrofolate--tRNA-(uracil-5-)-methyltransferase TrmFO (Dictyoglomus turgidum (strain DSM 6724 / Z-1310)).